The sequence spans 178 residues: ATP synthase subunit delta (178 aa).

The protein belongs to the ATPase delta chain family. F-type ATPases have 2 components, F(1) - the catalytic core - and F(0) - the membrane proton channel. F(1) has five subunits: alpha(3), beta(3), gamma(1), delta(1), epsilon(1). F(0) has three main subunits: a(1), b(2) and c(10-14). The alpha and beta chains form an alternating ring which encloses part of the gamma chain. F(1) is attached to F(0) by a central stalk formed by the gamma and epsilon chains, while a peripheral stalk is formed by the delta and b chains.

The protein resides in the cell inner membrane. Functionally, f(1)F(0) ATP synthase produces ATP from ADP in the presence of a proton or sodium gradient. F-type ATPases consist of two structural domains, F(1) containing the extramembraneous catalytic core and F(0) containing the membrane proton channel, linked together by a central stalk and a peripheral stalk. During catalysis, ATP synthesis in the catalytic domain of F(1) is coupled via a rotary mechanism of the central stalk subunits to proton translocation. Its function is as follows. This protein is part of the stalk that links CF(0) to CF(1). It either transmits conformational changes from CF(0) to CF(1) or is implicated in proton conduction. This is ATP synthase subunit delta from Methylococcus capsulatus (strain ATCC 33009 / NCIMB 11132 / Bath).